The chain runs to 216 residues: Ribosomal RNA large subunit methyltransferase E (216 aa).

The S-adenosyl-L-methionine site is built by glycine 60, tryptophan 62, aspartate 80, aspartate 96, and aspartate 121. Lysine 161 functions as the Proton acceptor in the catalytic mechanism.

Belongs to the class I-like SAM-binding methyltransferase superfamily. RNA methyltransferase RlmE family.

It is found in the cytoplasm. It catalyses the reaction uridine(2552) in 23S rRNA + S-adenosyl-L-methionine = 2'-O-methyluridine(2552) in 23S rRNA + S-adenosyl-L-homocysteine + H(+). Functionally, specifically methylates the uridine in position 2552 of 23S rRNA at the 2'-O position of the ribose in the fully assembled 50S ribosomal subunit. In Pseudomonas savastanoi pv. phaseolicola (strain 1448A / Race 6) (Pseudomonas syringae pv. phaseolicola (strain 1448A / Race 6)), this protein is Ribosomal RNA large subunit methyltransferase E.